The chain runs to 209 residues: Kynurenine formamidase (209 aa).

Position 20 (W20) interacts with substrate. Residues H50, H54, and D56 each contribute to the Zn(2+) site. The Proton donor/acceptor role is filled by H60. 2 residues coordinate Zn(2+): H161 and E173.

The protein belongs to the Cyclase 1 superfamily. KynB family. Homodimer. Requires Zn(2+) as cofactor.

The catalysed reaction is N-formyl-L-kynurenine + H2O = L-kynurenine + formate + H(+). Its pathway is amino-acid degradation; L-tryptophan degradation via kynurenine pathway; L-kynurenine from L-tryptophan: step 2/2. In terms of biological role, catalyzes the hydrolysis of N-formyl-L-kynurenine to L-kynurenine, the second step in the kynurenine pathway of tryptophan degradation. In Bacillus anthracis, this protein is Kynurenine formamidase.